A 1096-amino-acid polypeptide reads, in one-letter code: MATVPVYCVCRLPYDVTRFMIECDACKDWFHGSCVGVEEEEAPDIDIYHCPNCEKTHGKSTLKKKRTWHKHGPGQAPDVKPVQNGSQLFIKELRSRTFPSAEDVVARVPGSQLTLGYMEEHGFTEPILVPKKDGLGLAVPAPTFYVSDVENYVGPERSVDVTDVTKQKDCKMKLKEFVDYYYSTNRKRVLNVTNLEFSDTRMSSFVEPPDIVKKLSWVENYWPDDALLAKPKVTKYCLICVKDSYTDFHIDSGGASAWYHVLKGEKTFYLIRPASANISLYERWRSASNHSEMFFADQVDKCYKCIVKQGQTLFIPSGWIYATLTPVDCLAFAGHFLHSLSVEMQMRAYEVERRLKLGSLTQFPNFETACWYMGKHLLEAFKGSHKSGKQLPPHLVQGAKILNGAFRSWTKKQALAEHEDELPEHFKPSQLIKDLAKEIRLSENASKAVRPEVNTVASSDEVCDGDREKEEPPSPIEATPPQSLLEKVSKKKTPKTVKMPKPSKIPKPPKPPKPPRPPKTLKLKDGGKKKGKKSRESASPTIPNLDLLEAHTKEALTKMEPPKKGKATKSVLSVPNKDVVHMQNDVERLEIREQTKSKSEAKWKYKNSKPDSLLKMEEEQKLEKSPLAGNKDNKFSFSFSNKKLLGSKALRPPTSPGVFGALQNFKEDKPKPVRDEYEYVSDDGELKIDEFPIRRKKNAPKRDLSFLLDKKAVLPTPVTKPKLDSAAYKSDDSSDEGSLHIDTDTKPGRNARVKKESGSSAAGILDLLQASEEVGALEYNPSSQPPASPSTQEAIQGMLSMANLQASDSCLQTTWGAGQAKGSSLAAHGARKNGGGSGKSAGKRLLKRAAKNSVDLDDYEEEQDHLDACFKDSDYVYPSLESDEDNPIFKSRSKKRKGSDDAPYSPTARVGPSVPRQDRPVREGTRVASIETGLAAAAAKLSQQEEQKSKKKKSAKRKLTPNTTSPSTSTSISAGTTSTSTTPASTTPASTTPASTSTASSQASQEGSSPEPPPESHSSSLADHEYTAAGTFTGAQAGRTSQPMAPGVFLTQRRPSASSPNNNTAAKGKRTKKGMATAKQRLGKILKIHRNGKLLL.

Residues 5 to 56 form a PHD-type zinc finger; it reads PVYCVCRLPYDVTRFMIECDACKDWFHGSCVGVEEEEAPDIDIYHCPNCEKT. 2-oxoglutarate contacts are provided by T193 and T246. The region spanning 197–353 is the JmjC domain; the sequence is FSDTRMSSFV…MQMRAYEVER (157 aa). 2 residues coordinate Fe cation: H249 and D251. 4 residues coordinate 2-oxoglutarate: Y259, K266, Y321, and T323. Y321 contributes to the Fe cation binding site. Disordered regions lie at residues 447–634 and 646–674; these read KAVR…KDNK and GSKA…KPVR. S474 carries the phosphoserine modification. T479 bears the Phosphothreonine mark. The segment covering 503–518 has biased composition (pro residues); that stretch reads SKIPKPPKPPKPPRPP. S539 carries the phosphoserine modification. Basic and acidic residues-rich tracts occupy residues 548–563 and 578–624; these read LEAH…EPPK and DVVH…KLEK. S655 carries the phosphoserine modification. Over residues 665-674 the composition is skewed to basic and acidic residues; it reads FKEDKPKPVR. Phosphoserine occurs at positions 681 and 705. K711 participates in a covalent cross-link: Glycyl lysine isopeptide (Lys-Gly) (interchain with G-Cter in SUMO2). Disordered regions lie at residues 719–799, 817–846, and 877–1078; these read TKPK…QGML, AGQA…KRLL, and YPSL…MATA. K720 carries the post-translational modification N6-acetyllysine. Position 728 is a phosphotyrosine (Y728). Positions 729–757 are enriched in basic and acidic residues; the sequence is KSDDSSDEGSLHIDTDTKPGRNARVKKES. 4 positions are modified to phosphoserine: S730, S733, S734, and S738. A phosphoserine mark is found at S879, S882, and S899. Positions 916-925 are enriched in basic and acidic residues; sequence RQDRPVREGT. A compositionally biased stretch (basic residues) spans 949–959; sequence SKKKKSAKRKL. Composition is skewed to low complexity over residues 960–1009 and 1027–1040; these read TPNT…EGSS and TAAG…AGRT. Over residues 1053-1065 the composition is skewed to polar residues; sequence RRPSASSPNNNTA. Residue S1056 is modified to Phosphoserine; by PKA.

The protein belongs to the JHDM1 histone demethylase family. JHDM1D subfamily. As to quaternary structure, component of the PHF2-ARID5B complex, at least composed of PHF2 and ARID5B. Interacts with HNF4A and NR1H4. Interacts with RELA. Post-translationally, phosphorylated by PKA on specific serine residues, leading to the formation of an active lysine demethylase complex. In terms of tissue distribution, widely expressed, including in liver (at protein level).

It localises to the nucleus. Its subcellular location is the nucleolus. It is found in the chromosome. The protein resides in the centromere. The protein localises to the kinetochore. The catalysed reaction is N(6),N(6)-dimethyl-L-lysyl(9)-[histone H3] + 2-oxoglutarate + O2 = N(6)-methyl-L-lysyl(9)-[histone H3] + formaldehyde + succinate + CO2. With respect to regulation, enzymatically inactive by itself, and become active following phosphorylation by PKA. Lysine demethylase that demethylates both histones and non-histone proteins. Enzymatically inactive by itself, and becomes active following phosphorylation by PKA: forms a complex with ARID5B and mediates demethylation of methylated ARID5B. Demethylation of ARID5B leads to target the PHF2-ARID5B complex to target promoters, where PHF2 mediates demethylation of dimethylated 'Lys-9' of histone H3 (H3K9me2), followed by transcription activation of target genes. The PHF2-ARID5B complex acts as a coactivator of HNF4A in liver. PHF2 is recruited to trimethylated 'Lys-4' of histone H3 (H3K4me3) at rDNA promoters and promotes expression of rDNA. Involved in the activation of toll-like receptor 4 (TLR4)-target inflammatory genes in macrophages by catalyzing the demethylation of trimethylated histone H4 lysine 20 (H4K20me3) at the gene promoters. This is Lysine-specific demethylase PHF2 from Homo sapiens (Human).